Reading from the N-terminus, the 697-residue chain is Zinc finger protein 12 (697 aa).

A Glycyl lysine isopeptide (Lys-Gly) (interchain with G-Cter in SUMO2) cross-link involves residue Lys-3. Positions 8 to 79 constitute a KRAB domain; sequence VSFKDVAVDF…EGEFLLQSYP (72 aa). Glycyl lysine isopeptide (Lys-Gly) (interchain with G-Cter in SUMO2) cross-links involve residues Lys-98, Lys-179, Lys-182, Lys-209, Lys-215, Lys-224, Lys-239, and Lys-267. 2 C2H2-type zinc fingers span residues 269-291 and 297-319; these read YECS…QRTH and YECN…QRTH. Residues Lys-309, Lys-323, Lys-337, and Lys-365 each participate in a glycyl lysine isopeptide (Lys-Gly) (interchain with G-Cter in SUMO2) cross-link. C2H2-type zinc fingers lie at residues 325-347, 353-375, 381-403, 409-431, 437-459, 465-487, 493-515, and 521-543; these read YECN…QRTH, YECS…QRTH, YVCH…QKIH, YKCS…LRTH, YECN…YRTH, YECN…QRVH, YECN…HRTH, and YECS…RRIH. Glycyl lysine isopeptide (Lys-Gly) (interchain with G-Cter in SUMO2) cross-links involve residues Lys-544 and Lys-547. 5 C2H2-type zinc fingers span residues 549–571, 577–599, 605–627, 633–655, and 661–683; these read YECY…HRIH, YECS…QRTH, FECN…YRTH, and YECT…QRIH.

This sequence belongs to the krueppel C2H2-type zinc-finger protein family. As to expression, widely expressed in various adult tissues and embryonic developmental stages (isoform 3).

The protein localises to the nucleus. Functionally, transcriptional repressor which suppresses activation protein 1 (AP-1)- and serum response element (SRE)-mediated transcriptional activity. The chain is Zinc finger protein 12 (ZNF12) from Homo sapiens (Human).